The chain runs to 551 residues: Glucans biosynthesis protein D (551 aa).

Residues Met1–Ala32 constitute a signal peptide (tat-type signal).

This sequence belongs to the OpgD/OpgG family. Post-translationally, predicted to be exported by the Tat system. The position of the signal peptide cleavage has not been experimentally proven.

Its subcellular location is the periplasm. It participates in glycan metabolism; osmoregulated periplasmic glucan (OPG) biosynthesis. Its function is as follows. Probably involved in the control of the structural glucose backbone of osmoregulated periplasmic glucans (OPGs). The protein is Glucans biosynthesis protein D of Salmonella enteritidis PT4 (strain P125109).